Reading from the N-terminus, the 224-residue chain is Putative O-methyltransferase MUL_4520 (224 aa).

Residues 1–11 (MHGTDSSSDTP) show a composition bias toward polar residues. Residues 1-20 (MHGTDSSSDTPGQPAPSRAE) form a disordered region. S-adenosyl-L-methionine-binding positions include valine 51, glutamate 73, 75–76 (GT), serine 81, aspartate 99, and isoleucine 100. Aspartate 147 contributes to the substrate binding site. Residue aspartate 149 participates in S-adenosyl-L-methionine binding.

This sequence belongs to the class I-like SAM-binding methyltransferase superfamily. Cation-dependent O-methyltransferase family.

The sequence is that of Putative O-methyltransferase MUL_4520 from Mycobacterium ulcerans (strain Agy99).